Here is a 1735-residue protein sequence, read N- to C-terminus: Inactive tyrosine-protein kinase PEAK1 (1735 aa).

2 disordered regions span residues 26–66 and 111–145; these read LHQL…PPVA and LSQK…KISN. 2 stretches are compositionally biased toward polar residues: residues 111 to 121 and 130 to 145; these read LSQKPLNNNSE and DPQQ…KISN. S282 is subject to Phosphoserine. Disordered stretches follow at residues 324–410, 491–514, and 537–580; these read NSGV…SVKV, GRPK…LTPG, and SPRQ…SKTI. Over residues 325–336 the composition is skewed to low complexity; that stretch reads SGVSYGQGSVQS. Over residues 337 to 365 the composition is skewed to polar residues; that stretch reads TISSDCTSPGSSFTEESRSETASSLSQKV. The span at 367-378 shows a compositional bias: low complexity; sequence NGGISPGNPGNS. The span at 384 to 393 shows a compositional bias: polar residues; it reads TESNFESPPG. Residues 498–509 are compositionally biased toward low complexity; it reads SSSTPNSPVTSP. Residues S537, S569, and S584 each carry the phosphoserine modification. Over residues 566-580 the composition is skewed to polar residues; that stretch reads APTSPTATNISSKTI. 2 positions are modified to phosphotyrosine: Y632 and Y638. Position 645 is a phosphoserine (S645). Y662 is subject to Phosphotyrosine. 3 disordered regions span residues 663 to 762, 800 to 919, and 1019 to 1097; these read EEIE…REKA, PDAD…AADA, and RNSE…SATY. 3 stretches are compositionally biased toward polar residues: residues 704–735, 745–757, and 819–839; these read QEFN…QRPT, AQGS…SSNS, and LFTS…SPTA. 2 positions are modified to phosphoserine: S824 and S825. The span at 847 to 863 shows a compositional bias: low complexity; the sequence is TKPVTSPPSKLVTSAQS. The segment covering 864-873 has biased composition (pro residues); the sequence is EPPPPFPPPR. Residues 879–901 show a composition bias toward polar residues; that stretch reads YHASNLLQRHFTNWTKPTSPTRS. Position 897 is a phosphoserine (S897). Basic and acidic residues-rich tracts occupy residues 902-919 and 1037-1055; these read TEAE…AADA and ACSR…RDPR. Residues 1076 to 1086 are compositionally biased toward acidic residues; the sequence is EREEEKDDTLD. At T1141 the chain carries Phosphothreonine. Y1177 bears the Phosphotyrosine mark. Residues 1274-1300 form a required for homodimerization region; the sequence is EVVGKLRSLHTDALKRLAVKCEDLFMA. The Protein kinase domain occupies 1302–1664; the sequence is QKDQLRFGVD…LLWGPREDLF (363 aa). S1363 is subject to Phosphoserine. Residues 1394-1445 are disordered; sequence WEDPDAPEKAEDGTEDSEEEGKAETLGGNPEPCSETEPSQKENQRVTNRKQR. Residues 1659 to 1732 are required for homodimerization; the sequence is PREDLFQIFT…DSLSYIVKIL (74 aa).

It belongs to the protein kinase superfamily. Homodimer. Interacts with BCAR1 and CRK. Interacts with PRAG1. Interacts (when phosphorylated at Tyr-1177) with SHC1 (via PID domain). Found in a complex with PPP1CA, PPP1CC and SHC1. Interacts (when phosphorylated at Tyr-632) with tensin TNS3 (when phosphorylated on the SH2 domain); TNS3 also interacts with integrins ITGB1, ITGB3 and ITGB5 and mediates their association with PEAK1. Phosphorylated on tyrosine in a CSK-dependent manner in response to adhesion to fibronectin and to EGF stimulation. Phosphorylation at Tyr-662 by a Src family kinase controls subcellular localization to focal adhesion and focal adhesion dynamics. Phosphorylation at Tyr-1177 is essential for binding to SHC1. Phosphorylation at Tyr-632 promotes interaction with tensin TNS3.

It is found in the cytoplasm. The protein resides in the cytoskeleton. Its subcellular location is the cell junction. The protein localises to the focal adhesion. Functionally, probable catalytically inactive kinase. Scaffolding protein that regulates the cytoskeleton to control cell spreading and migration by modulating focal adhesion dynamics. Acts as a scaffold for mediating EGFR signaling. The chain is Inactive tyrosine-protein kinase PEAK1 (Peak1) from Mus musculus (Mouse).